The chain runs to 621 residues: Zinc metalloproteinase-disintegrin-like TSV-DM (621 aa).

An N-terminal signal peptide occupies residues 1-20; it reads MIQVLLVTICLAVFPYQGSS. A propeptide spanning residues 21–191 is cleaved from the precursor; the sequence is IILESGNVND…EASQSNLTPE (171 aa). The residue at position 192 (glutamine 192) is a Pyrrolidone carboxylic acid. Residues 200-396 enclose the Peptidase M12B domain; it reads KYVKFFLVAD…NMPQCILKKP (197 aa). N-linked (GlcNAc...) asparagine glycosylation occurs at asparagine 219. Cystine bridges form between cysteine 311–cysteine 391, cysteine 351–cysteine 375, and cysteine 353–cysteine 358. Histidine 336 is a Zn(2+) binding site. Glutamate 337 is a catalytic residue. Residues histidine 340 and histidine 346 each coordinate Zn(2+). Residues 404-489 form the Disintegrin domain; the sequence is PPVCGNYFVE…AECTDRFQRN (86 aa). Residues valine 406, asparagine 409, phenylalanine 411, glutamate 413, glutamate 416, and aspartate 419 each contribute to the Ca(2+) site. 14 disulfide bridges follow: cysteine 407–cysteine 436, cysteine 418–cysteine 431, cysteine 420–cysteine 426, cysteine 430–cysteine 453, cysteine 444–cysteine 450, cysteine 449–cysteine 475, cysteine 462–cysteine 482, cysteine 469–cysteine 500, cysteine 493–cysteine 505, cysteine 512–cysteine 562, cysteine 527–cysteine 573, cysteine 540–cysteine 550, cysteine 557–cysteine 599, and cysteine 593–cysteine 605. Positions 468–470 match the D/ECD-tripeptide motif; that stretch reads ECD. 5 residues coordinate Ca(2+): aspartate 470, methionine 471, aspartate 473, aspartate 484, and arginine 485. A glycan (N-linked (GlcNAc...) asparagine) is linked at asparagine 502.

This sequence belongs to the venom metalloproteinase (M12B) family. P-III subfamily. P-IIIc sub-subfamily. In terms of assembly, homodimer; disulfide-linked. It depends on Zn(2+) as a cofactor. Post-translationally, the N-terminus is blocked. As to expression, expressed by the venom gland.

The protein localises to the secreted. Its activity is regulated as follows. Inhibited by EDTA and DTT, and partially inhibited by EGTA, but not inhibited by PMSF and NEM. Snake venom zinc metalloprotease that hydrolyzes the alpha-chain (FGA) and more slowly the beta-chain (FGB) of fibrinogen. Inhibits cell proliferation and induces cell morphologic changes transiently on human umbilical vein endothelial cells. This Trimeresurus stejnegeri (Chinese green tree viper) protein is Zinc metalloproteinase-disintegrin-like TSV-DM.